The following is a 273-amino-acid chain: Putative ABC transporter ATP-binding protein DVU_1056 (273 aa).

The ABC transporter domain maps to 10–242 (LSLDDIHFTY…IHHGGEVAHE (233 aa)). 44 to 51 (GHNGSGKT) is an ATP binding site. The interval 234–273 (HHGGEVAHEHPSRGCCHQHDGSHHHAGHDDDHPHTSQTTE) is disordered. The span at 235 to 267 (HGGEVAHEHPSRGCCHQHDGSHHHAGHDDDHPH) shows a compositional bias: basic and acidic residues.

Belongs to the ABC transporter superfamily.

It localises to the cell inner membrane. Functionally, probably part of an ABC transporter complex. Responsible for energy coupling to the transport system. The polypeptide is Putative ABC transporter ATP-binding protein DVU_1056 (Nitratidesulfovibrio vulgaris (strain ATCC 29579 / DSM 644 / CCUG 34227 / NCIMB 8303 / VKM B-1760 / Hildenborough) (Desulfovibrio vulgaris)).